The sequence spans 414 residues: Bifunctional protein GlmU (414 aa).

The pyrophosphorylase stretch occupies residues 1–208 (MDAVILCAGS…SSKLYGIELN (208 aa)). UTP contacts are provided by residues 6 to 9 (LCAG), Gln-74, and Gly-79. The N-acetyl-alpha-D-glucosamine 1-phosphate site is built by Thr-80, Gly-130, Asn-142, and Asn-162. The linker stretch occupies residues 209-228 (GYWNDIGRPWDVLSANNYFL). Residues 229 to 414 (KNIMPKISGN…KDELIIKKRN (186 aa)) are N-acetyltransferase. The active-site Proton acceptor is the His-312. Acetyl-CoA is bound by residues Ala-388 and Lys-405.

It in the N-terminal section; belongs to the N-acetylglucosamine-1-phosphate uridyltransferase family. This sequence in the C-terminal section; belongs to the transferase hexapeptide repeat family.

The enzyme catalyses N-acetyl-alpha-D-glucosamine 1-phosphate + UTP + H(+) = UDP-N-acetyl-alpha-D-glucosamine + diphosphate. It catalyses the reaction alpha-D-glucosamine 1-phosphate + acetyl-CoA = N-acetyl-alpha-D-glucosamine 1-phosphate + CoA + H(+). It functions in the pathway nucleotide-sugar biosynthesis; UDP-N-acetyl-alpha-D-glucosamine biosynthesis; N-acetyl-alpha-D-glucosamine 1-phosphate from alpha-D-glucosamine 6-phosphate (route II): step 2/2. It participates in nucleotide-sugar biosynthesis; UDP-N-acetyl-alpha-D-glucosamine biosynthesis; UDP-N-acetyl-alpha-D-glucosamine from N-acetyl-alpha-D-glucosamine 1-phosphate: step 1/1. Catalyzes the last two sequential reactions in the de novo biosynthetic pathway for UDP-N-acetyl-glucosamine (UDP-GlcNAc). Responsible for the acetylation of GlcN-1-P to GlcNAc-1-P, and for the uridyl transfer from UTP to GlcNAc-1-P, to produce UDP-GlcNAc and pyrophosphate. The chain is Bifunctional protein GlmU from Methanococcus vannielii (strain ATCC 35089 / DSM 1224 / JCM 13029 / OCM 148 / SB).